A 440-amino-acid chain; its full sequence is Branched-chain amino acid permease BrnQ (440 aa).

12 consecutive transmembrane segments (helical) span residues 9–29 (YIII…NLIF), 46–66 (AGFL…FVFS), 80–100 (PVFG…FFAI), 121–141 (SPVS…LLSL), 149–169 (IVGK…VAVA), 196–216 (GYLT…VNAL), 227–247 (LIVV…VMYT), 284–304 (ILLG…LITA), 321–341 (IAVV…TQLI), 348–368 (LLTM…HSVF), 378–398 (SLLF…GIKI), and 414–434 (IGLG…ILSI).

The protein belongs to the branched chain amino acid transporter family.

The protein localises to the cell membrane. In terms of biological role, branched-chain amino acid transport system which is involved in the uptake of isoleucine and valine. Probably does not transport leucine. Together with BcaP and BraB, plays an important role in the activation of CodY, a branched-chain amino acid-responsive transcriptional regulator that controls the expression of several dozen transcription units in B.subtilis. In Bacillus subtilis (strain 168), this protein is Branched-chain amino acid permease BrnQ.